Consider the following 711-residue polypeptide: DNA topoisomerase 3 (711 aa).

The 134-residue stretch at 2–135 folds into the Toprim domain; it reads KSLILAEKPS…IKRLWISSVT (134 aa). Glutamate 8 and aspartate 104 together coordinate Mg(2+). The Topo IA-type catalytic domain occupies 152 to 580; sequence FQHLYEAALA…EMKAFTQSIV (429 aa). Residues 186 to 191 are interaction with DNA; the sequence is SLGRVQ. Catalysis depends on tyrosine 305, which acts as the O-(5'-phospho-DNA)-tyrosine intermediate. Residues 672-699 are disordered; sequence KRFKNKSSGKVSKKEMKKYMNNEDSLEN. The segment covering 683 to 692 has biased composition (basic and acidic residues); sequence SKKEMKKYMN.

The protein belongs to the type IA topoisomerase family. Mg(2+) serves as cofactor.

It catalyses the reaction ATP-independent breakage of single-stranded DNA, followed by passage and rejoining.. Its function is as follows. Releases the supercoiling and torsional tension of DNA, which is introduced during the DNA replication and transcription, by transiently cleaving and rejoining one strand of the DNA duplex. Introduces a single-strand break via transesterification at a target site in duplex DNA. The scissile phosphodiester is attacked by the catalytic tyrosine of the enzyme, resulting in the formation of a DNA-(5'-phosphotyrosyl)-enzyme intermediate and the expulsion of a 3'-OH DNA strand. The free DNA strand then undergoes passage around the unbroken strand, thus removing DNA supercoils. Finally, in the religation step, the DNA 3'-OH attacks the covalent intermediate to expel the active-site tyrosine and restore the DNA phosphodiester backbone. The chain is DNA topoisomerase 3 from Staphylococcus haemolyticus (strain JCSC1435).